The chain runs to 538 residues: MAITYSSADELGNTTEGFLEIRENTSGGWKSARLIIVVQMAERFAYFGIASNLIMYLTGPLGESTAAAAANVNAWTGTVAFLPLLGGFLADSYLGRFRTIIISSSLYILGLGLLSFSTMIPSHQSKDSNQLQETIFFFSLYLVAIGQGGYNPCIKVFGADQFDGNDHKEARDKSSFFNWLMFGNCISILTTRLVSTYIQENLSWSLGFGIPSVSMLLSLFLFLLGTTSYRFSTERVGKKNPFARISRVFMEALKNRRQPDLDIANANANETLLLLAHQSSKQFRFLDRAAISCELAEIEEAKAVLRLIPIWITSVVYTIVHAQSPTFFTKQGATMDRSISPGLLVPAATLQSFINLSVVVFIPIYDRLLVPFARSFTQNSSGITTLQRIGTGIFLSILAMVLAALVETKRLQAARDELSIPMSVWWLIPQYVIFGVSDMFTMVGLQEFFYGQVPSELRSVGMALNLSIYGAGNYLSSFMISVIDKITNQYGQRSWFDNDLDQAHLDYFYWLLACLGFIGFAFYLWFAKSYVYSRSNTF.

2 helical membrane-spanning segments follow: residues 44–64 (FAYF…LGES) and 74–94 (AWTG…DSYL). Thr99 is subject to Phosphothreonine. 10 helical membrane-spanning segments follow: residues 100-120 (IIIS…STMI), 134-154 (TIFF…NPCI), 175-194 (SFFN…TRLV), 204-224 (WSLG…LFLL), 308-328 (IPIW…PTFF), 342-362 (GLLV…VVFI), 389-409 (IGTG…VETK), 424-444 (VWWL…TMVG), 463-483 (ALNL…ISVI), and 507-527 (YFYW…LWFA).

Belongs to the major facilitator superfamily. Proton-dependent oligopeptide transporter (POT/PTR) (TC 2.A.17) family. In terms of tissue distribution, expressed in shoots and roots.

The protein resides in the membrane. The protein is Protein NRT1/ PTR FAMILY 5.11 (NPF5.11) of Arabidopsis thaliana (Mouse-ear cress).